Consider the following 305-residue polypeptide: MKDKVNVATSTFNHTPVLANELIEIIKKLPEDLIKNCLIIDATIGGGGHSSLVLETFPGISVIGLDQDPKAVAAASEHLKIFGDRAKIETTNFSNFTPSKKVAMVFADLGVSSPQLDEGSRGFSFRLNGPLDMRMNQIDGTNAAELIDRLSENELANLIFKYGEERFSRRIAKRIKHDLAKQGPYSGTIALAYAIAGCYPPKLRNRRVHPATKTFQALRIAINHELDVLSVLLKKAPEWLLDDGLFAVISFHSLEDRLVKKSFLTDTRLERITRKPLIATTNEISINPRSRSAKMRVARRIEAIK.

S-adenosyl-L-methionine-binding positions include 47-49, aspartate 66, phenylalanine 93, aspartate 108, and glutamine 115; that span reads GGH.

Belongs to the methyltransferase superfamily. RsmH family.

Its subcellular location is the cytoplasm. The enzyme catalyses cytidine(1402) in 16S rRNA + S-adenosyl-L-methionine = N(4)-methylcytidine(1402) in 16S rRNA + S-adenosyl-L-homocysteine + H(+). Functionally, specifically methylates the N4 position of cytidine in position 1402 (C1402) of 16S rRNA. The protein is Ribosomal RNA small subunit methyltransferase H of Prochlorococcus marinus (strain MIT 9211).